Reading from the N-terminus, the 1048-residue chain is FHIP family protein GJ17503 (1048 aa).

A compositionally biased stretch (polar residues) spans 1-15 (MSWLRTSPLRQSLTR). Residues 1–32 (MSWLRTSPLRQSLTRNSGSSGSGNSSATTTLR) are disordered. The segment covering 16–26 (NSGSSGSGNSS) has biased composition (low complexity). Position 500 is a phosphoserine (Ser500). 3 disordered regions span residues 652–675 (TTTATSDTDLEHNNSSSIGSGRRD), 813–871 (APMH…KRRS), and 924–984 (ARGA…ESGL). Residues 816–838 (HQQHQQQQLQHTTNPTQQQQAQQ) are compositionally biased toward low complexity. Polar residues-rich tracts occupy residues 839-857 (RSTYATLSAATPVQASPTS) and 929-954 (QEQSRGNTCETSLSTAPRQEAQTAVV). Residues 955-978 (SSSNSSIGGSTQTLSATHSSSTLH) show a composition bias toward low complexity.

The protein belongs to the FHIP family.

In Drosophila virilis (Fruit fly), this protein is FHIP family protein GJ17503.